The chain runs to 337 residues: 2-oxoglutarate-dependent ethylene/succinate-forming enzyme (337 aa).

A Fe2OG dioxygenase domain is found at 166–286 (GWHHMRVLRF…RFACAYFHEP (121 aa)). 2 residues coordinate Fe cation: histidine 189 and histidine 268.

It belongs to the iron/ascorbate-dependent oxidoreductase family. Monomer. Fe(2+) is required as a cofactor.

The enzyme catalyses 2-oxoglutarate + O2 + 2 H(+) = ethene + 3 CO2 + H2O. It carries out the reaction L-arginine + 2-oxoglutarate + O2 = guanidine + L-glutamate 5-semialdehyde + succinate + CO2. The protein operates within alkene biosynthesis; ethylene biosynthesis via 2-oxoglutarate. Its function is as follows. Simultaneously catalyzes two reactions, namely formation of ethylene and of succinate from 2-oxoglutarate. The protein is 2-oxoglutarate-dependent ethylene/succinate-forming enzyme (efe) of Pseudomonas syringae pv. pisi.